Here is a 104-residue protein sequence, read N- to C-terminus: MGQCRSANAEDAQEFSDVERAIETLIKNFHQYSVEGGKETLTPSELRDLVTQQLPHLMPSNCGLEEKIANLGSCNDSKLEFRSFWELIGEAAKSVKLERPVRGH.

The region spanning 27-61 is the EF-hand domain; that stretch reads KNFHQYSVEGGKETLTPSELRDLVTQQLPHLMPSN.

The protein belongs to the S-100 family. In terms of assembly, homodimer. Interacts with AGER. In terms of tissue distribution, expressed at highest levels in colon and at moderate levels in thymus, kidney, liver, small intestine, and lung. Low expression in heart and no expression is seen in brain, skeletal muscle, spleen, placenta and peripheral blood leukocytes.

The protein localises to the cytoplasm. Modulates P53/TP53 protein levels, and thereby plays a role in the regulation of cell survival and apoptosis. Depending on the context, it can promote cell proliferation or apoptosis. Plays a role in the regulation of cell migration by modulating the levels of MMP2, a matrix protease that is under transcriptional control of P53/TP53. Does not bind calcium. This Homo sapiens (Human) protein is Protein S100-A14 (S100A14).